Consider the following 203-residue polypeptide: A-type ATP synthase subunit E (203 aa).

The protein belongs to the V-ATPase E subunit family. As to quaternary structure, has multiple subunits with at least A(3), B(3), C, D, E, F, H, I and proteolipid K(x).

It is found in the cell membrane. Its function is as follows. Component of the A-type ATP synthase that produces ATP from ADP in the presence of a proton gradient across the membrane. This chain is A-type ATP synthase subunit E, found in Methanococcus maripaludis (strain C7 / ATCC BAA-1331).